The primary structure comprises 265 residues: Aliphatic sulfonates import ATP-binding protein SsuB 1 (265 aa).

Residues 31–255 enclose the ABC transporter domain; it reads FAFKGVEKRF…RRGSAELARL (225 aa). 63–70 provides a ligand contact to ATP; the sequence is GKSGCGKS.

It belongs to the ABC transporter superfamily. Aliphatic sulfonates importer (TC 3.A.1.17.2) family. In terms of assembly, the complex is composed of two ATP-binding proteins (SsuB), two transmembrane proteins (SsuC) and a solute-binding protein (SsuA).

The protein localises to the cell inner membrane. The enzyme catalyses ATP + H2O + aliphatic sulfonate-[sulfonate-binding protein]Side 1 = ADP + phosphate + aliphatic sulfonateSide 2 + [sulfonate-binding protein]Side 1.. Functionally, part of the ABC transporter complex SsuABC involved in aliphatic sulfonates import. Responsible for energy coupling to the transport system. The sequence is that of Aliphatic sulfonates import ATP-binding protein SsuB 1 from Mesorhizobium japonicum (strain LMG 29417 / CECT 9101 / MAFF 303099) (Mesorhizobium loti (strain MAFF 303099)).